Reading from the N-terminus, the 273-residue chain is Putative pyruvate, phosphate dikinase regulatory protein (273 aa).

153-160 is an ADP binding site; it reads GISRTSKT.

It belongs to the pyruvate, phosphate/water dikinase regulatory protein family. PDRP subfamily.

The catalysed reaction is N(tele)-phospho-L-histidyl/L-threonyl-[pyruvate, phosphate dikinase] + ADP = N(tele)-phospho-L-histidyl/O-phospho-L-threonyl-[pyruvate, phosphate dikinase] + AMP + H(+). It catalyses the reaction N(tele)-phospho-L-histidyl/O-phospho-L-threonyl-[pyruvate, phosphate dikinase] + phosphate + H(+) = N(tele)-phospho-L-histidyl/L-threonyl-[pyruvate, phosphate dikinase] + diphosphate. In terms of biological role, bifunctional serine/threonine kinase and phosphorylase involved in the regulation of the pyruvate, phosphate dikinase (PPDK) by catalyzing its phosphorylation/dephosphorylation. This chain is Putative pyruvate, phosphate dikinase regulatory protein, found in Rhizobium etli (strain CIAT 652).